A 188-amino-acid chain; its full sequence is Elongation factor P (188 aa).

The protein belongs to the elongation factor P family.

It is found in the cytoplasm. Its pathway is protein biosynthesis; polypeptide chain elongation. Involved in peptide bond synthesis. Stimulates efficient translation and peptide-bond synthesis on native or reconstituted 70S ribosomes in vitro. Probably functions indirectly by altering the affinity of the ribosome for aminoacyl-tRNA, thus increasing their reactivity as acceptors for peptidyl transferase. The chain is Elongation factor P from Acidiphilium cryptum (strain JF-5).